The chain runs to 995 residues: Zinc finger protein ZFPM1 (995 aa).

Over residues 1–14 (MSRRKQSNPRQIKR) the composition is skewed to basic residues. Residues 1–103 (MSRRKQSNPR…EAAMASPWSG (103 aa)) are disordered. Residues 15–36 (SLRDMEAGEEAKAMDSSPKEQE) show a composition bias toward basic and acidic residues. 2 stretches are compositionally biased toward acidic residues: residues 67-78 (SPEDPEDMEGQE) and 86-95 (EEKEEKEEEA). Ser-99 and Ser-143 each carry phosphoserine. The CCHC FOG-type 1 zinc-finger motif lies at 249-282 (VINKDVFPCKDCGIWYRSERNLQAHLLYYCASRQ). Zn(2+) contacts are provided by Cys-257, Cys-260, His-273, and Cys-278. Ser-286 is modified (phosphoserine). 3 C2H2-type zinc fingers span residues 303–327 (RVCPFPQCRKSCPSASSLEIHMRSH), 333–355 (FVCLICLSAFTTKANCERHLKVH), and 361–384 (GVCHNCGFISTTRDILYSHLVTNH). An interaction with TACC3 region spans residues 343–354 (TTKANCERHLKV). 3 positions are modified to phosphoserine: Ser-397, Ser-497, and Ser-500. The interval 424 to 526 (PLVPADKAPT…SSPGPGELTM (103 aa)) is disordered. Residues 509 to 525 (ELSSPTPGSSPGPGELT) show a composition bias toward low complexity. A CCHC FOG-type 2 zinc finger spans residues 584 to 617 (FSGTKGATCFECEITFNNINNFYVHKRLYCSGRR). Zn(2+) is bound by residues Cys-592, Cys-595, His-608, and Cys-613. Residues 616–694 (RRAPEDPPTV…SVDDAEDDPS (79 aa)) are disordered. Over residues 630–652 (AATGPARAPAGAAAEPDPSRSSP) the composition is skewed to low complexity. 2 positions are modified to phosphoserine: Ser-651 and Ser-684. Residues 690–723 (EDDPSRTLCEACNIRFSRHETYTVHKRYYCASRH) form a CCHC FOG-type 3 zinc finger. Zn(2+) contacts are provided by Cys-698, Cys-701, His-714, and Cys-719. Residues 721-827 (SRHDPPPRRP…PRRQSPDAPT (107 aa)) are disordered. Composition is skewed to pro residues over residues 728 to 740 (RRPPAPTTAPGPA) and 764 to 779 (GAPPPAAGPAPVPVVP). A compositionally biased stretch (low complexity) spans 785–800 (LPSSPRPGSASAGPAP). Ser-803 is subject to Phosphoserine. Positions 811–817 (PIDLSKR) are interaction with CTBP2. Position 822 is a phosphoserine (Ser-822). The CCHC FOG-type 4 zinc-finger motif lies at 830–863 (PALADYHECTACRVSFHSLEAYLAHKKYSCPAAP). Zn(2+) contacts are provided by Cys-838, Cys-841, His-854, and Cys-859. A C2H2-type 4 zinc finger spans residues 868 to 891 (ALCPYCPPNGRVRGDLVEHLRQAH). A disordered region spans residues 892-960 (GLQVAKPAAS…APAPAPGGGG (69 aa)). The segment covering 908–922 (TPAERAPRDSPDGRA) has biased composition (basic and acidic residues). Phosphoserine is present on residues Ser-925 and Ser-927. The CCHC FOG-type 5 zinc-finger motif lies at 957 to 990 (GGGGGHRYCRLCNIRFSSLSTFIAHKKYYCSSHA). The Zn(2+) site is built by Cys-965, Cys-968, His-981, and Cys-986.

Belongs to the FOG (Friend of GATA) family. Interacts with the N-terminal zinc-finger of GATA1, GATA2 and GATA3. Interacts with corepressor CTBP2; this interaction is however not essential for corepressor activity in erythropoiesis. Interacts with TACC3. As to expression, mainly expressed in hematopoietic tissues. Expressed in the spleen, a primary site of hematopoiesis in the adult mouse, as well as in the liver and testis, but not in the heart, brain, lung, kidney, or skeletal muscle. Among hematopoietic cell lines, it is strongly expressed in erythroid and megakaryocytic cell lines. Expressed at low level in several lymphoid and early myeloid cell lines. Not expressed in mast cell and macrophage lines. Expressed in the heart, where it colocalizes with GATA4, GATA5 and GATA6.

Its subcellular location is the nucleus. Transcription regulator that plays an essential role in erythroid and megakaryocytic cell differentiation. Essential cofactor that acts via the formation of a heterodimer with transcription factors of the GATA family GATA1, GATA2 and GATA3. Such heterodimer can both activate or repress transcriptional activity, depending on the cell and promoter context. The heterodimer formed with GATA proteins is essential to activate expression of genes such as NFE2, ITGA2B, alpha- and beta-globin, while it represses expression of KLF1. May be involved in regulation of some genes in gonads. May also be involved in cardiac development, in a non-redundant way with ZFPM2/FOG2. The protein is Zinc finger protein ZFPM1 (Zfpm1) of Mus musculus (Mouse).